The primary structure comprises 111 residues: MAKKQSIRSRNFRRSDPAYDLDSSTAIENETKLSVKEKVAKEIANIALRSGGSESNGISKKKKNKKQTSKKAKDKLAAALKAQAREERLDTKISKSLQKQEKLKARKQGDE.

Composition is skewed to basic residues over residues 1-12 (MAKKQSIRSRNF) and 59-73 (SKKKKNKKQTSKKAK). 2 disordered regions span residues 1–25 (MAKKQSIRSRNFRRSDPAYDLDSST) and 47–111 (ALRS…QGDE). The segment covering 83-111 (QAREERLDTKISKSLQKQEKLKARKQGDE) has biased composition (basic and acidic residues).

Belongs to the ECM1 family. Associates with the pre-60S ribosomal particle and the nucleopore complex.

Its subcellular location is the nucleus. The protein localises to the nucleolus. The protein resides in the cytoplasm. Functionally, pre-ribosomal factor involved in 60S ribosomal protein subunit export from the nucleus. This is Shuttling pre-60S factor C23B6.02c from Schizosaccharomyces pombe (strain 972 / ATCC 24843) (Fission yeast).